Consider the following 197-residue polypeptide: Large ribosomal subunit protein uL10 (197 aa).

The disordered stretch occupies residues 163–197; that stretch reads GAPAAAEAPAAEESADSAAEAAAEAPAEAPAAEEN.

Belongs to the universal ribosomal protein uL10 family. Part of the ribosomal stalk of the 50S ribosomal subunit. The N-terminus interacts with L11 and the large rRNA to form the base of the stalk. The C-terminus forms an elongated spine to which L12 dimers bind in a sequential fashion forming a multimeric L10(L12)X complex.

Functionally, forms part of the ribosomal stalk, playing a central role in the interaction of the ribosome with GTP-bound translation factors. The sequence is that of Large ribosomal subunit protein uL10 from Pseudarthrobacter chlorophenolicus (strain ATCC 700700 / DSM 12829 / CIP 107037 / JCM 12360 / KCTC 9906 / NCIMB 13794 / A6) (Arthrobacter chlorophenolicus).